The sequence spans 33 residues: Cecropin-C (33 aa).

Lysine 21 carries the 5-hydroxylysine modification.

As to quaternary structure, monomer. In terms of tissue distribution, hemolymph.

The protein localises to the secreted. In terms of biological role, cecropins have lytic and antibacterial activity against several Gram-positive and Gram-negative bacteria. Also has activity against fungi. The protein is Cecropin-C of Heliothis virescens (Tobacco budworm moth).